The sequence spans 63 residues: Large ribosomal subunit protein bL28 (63 aa).

This sequence belongs to the bacterial ribosomal protein bL28 family.

In Heliobacterium modesticaldum (strain ATCC 51547 / Ice1), this protein is Large ribosomal subunit protein bL28.